The primary structure comprises 463 residues: GTPase Der (463 aa).

EngA-type G domains are found at residues lysine 2 to lysine 164 and isoleucine 198 to threonine 369. Residues glycine 8 to serine 15, aspartate 55 to leucine 59, asparagine 116 to aspartate 119, glycine 204 to serine 211, aspartate 251 to isoleucine 255, and asparagine 315 to aspartate 318 contribute to the GTP site. The region spanning glutamine 370–serine 454 is the KH-like domain.

It belongs to the TRAFAC class TrmE-Era-EngA-EngB-Septin-like GTPase superfamily. EngA (Der) GTPase family. In terms of assembly, associates with the 50S ribosomal subunit.

Its function is as follows. GTPase that plays an essential role in the late steps of ribosome biogenesis. In Campylobacter fetus subsp. fetus (strain 82-40), this protein is GTPase Der.